The sequence spans 266 residues: ATP synthase subunit a (266 aa).

6 helical membrane-spanning segments follow: residues Lys38–Ala58, Leu99–Ile119, His126–Ile146, Gly162–Val182, Leu191–Phe211, and Ser224–Leu244.

It belongs to the ATPase A chain family. In terms of assembly, F-type ATPases have 2 components, CF(1) - the catalytic core - and CF(0) - the membrane proton channel. CF(1) has five subunits: alpha(3), beta(3), gamma(1), delta(1), epsilon(1). CF(0) has three main subunits: a(1), b(2) and c(9-12). The alpha and beta chains form an alternating ring which encloses part of the gamma chain. CF(1) is attached to CF(0) by a central stalk formed by the gamma and epsilon chains, while a peripheral stalk is formed by the delta and b chains.

The protein resides in the cell membrane. Its function is as follows. Key component of the proton channel; it plays a direct role in the translocation of protons across the membrane. In Paenarthrobacter aurescens (strain TC1), this protein is ATP synthase subunit a.